The chain runs to 185 residues: Signal peptidase I P (185 aa).

The Cytoplasmic portion of the chain corresponds to 1–14; that stretch reads MFDKEKRKKSNIID. A helical transmembrane segment spans residues 15 to 34; it reads WIKAILIALILVFLVRTFLF. The Extracellular portion of the chain corresponds to 35 to 185; sequence EPYIVQGESM…FPLDRIRHAK (151 aa). Catalysis depends on residues Ser-43 and Lys-85.

Belongs to the peptidase S26 family.

It is found in the cell membrane. It carries out the reaction Cleavage of hydrophobic, N-terminal signal or leader sequences from secreted and periplasmic proteins.. This chain is Signal peptidase I P (sipP), found in Bacillus subtilis subsp. natto.